A 221-amino-acid chain; its full sequence is Oxaloacetate tautomerase FAHD1, mitochondrial (221 aa).

The N-terminal 24 residues, 1-24 (MASTKPLSRFWEWGKNIVCVGRNY), are a transit peptide targeting the mitochondrion. A Phosphoserine modification is found at S37. 3 residues coordinate Mg(2+): E68, E70, and D99. The residue at position 110 (K110) is an N6-acetyllysine. The residue at position 112 (K112) is an N6-succinyllysine.

Belongs to the FAH family. Homodimer. Requires Mg(2+) as cofactor. The cofactor is Mn(2+).

Its subcellular location is the mitochondrion. The protein resides in the cytoplasm. It localises to the cytosol. It catalyses the reaction oxaloacetate = enol-oxaloacetate. The catalysed reaction is oxaloacetate + H(+) = pyruvate + CO2. The enzyme catalyses a 3-acylpyruvate + H2O = a carboxylate + pyruvate + H(+). It carries out the reaction acetylpyruvate + H2O = acetate + pyruvate + H(+). It catalyses the reaction 3-fumarylpyruvate + H2O = fumarate + pyruvate + H(+). Its activity is regulated as follows. Oxaloacetate decarboxylation is competitively inhibited by oxalate. Tautomerase that converts enol-oxaloacetate, a strong inhibitor of succinate dehydrogenase, to the physiological keto form of oxaloacetate. It is thereby required to maximize aerobic respiration efficiency by preventing succinate dehydrogenase inhibition. Also acts as a weak oxaloacetate decarboxylase (ODx), catalyzing the decarboxylation of oxaloacetate (OAA) to pyruvate and CO(2), and as such is likely a regulatory enzyme in the TCA cycle. Also displays acylpyruvase activity, being able to hydrolyze acetylpyruvate and fumarylpyruvate in vitro. The sequence is that of Oxaloacetate tautomerase FAHD1, mitochondrial from Rattus norvegicus (Rat).